The sequence spans 315 residues: Apolipoprotein F (315 aa).

The first 24 residues, 1 to 24 (MHSLRLILMSIQLLCYLLLCPVDA), serve as a signal peptide directing secretion. Residues 25–154 (TSHGEATSVS…EQPGPKRAKR (130 aa)) constitute a propeptide that is removed on maturation.

The protein belongs to the apolipoprotein F family. Liver.

The protein localises to the secreted. Functionally, minor apolipoprotein that associates with LDL. Inhibits cholesteryl ester transfer protein (CETP) activity and appears to be an important regulator of cholesterol transport. Also associates to a lesser degree with VLDL, Apo-AI and Apo-AII. This Mus musculus (Mouse) protein is Apolipoprotein F (Apof).